We begin with the raw amino-acid sequence, 203 residues long: Ras-like protein family member 10B (203 aa).

Positions 1–203 are small GTPase-like; it reads MVSTYRVAVL…ALRRNRCAIM (203 aa). Residue 11–18 coordinates GTP; it reads GARGVGKS. Residues 33–42 carry the Effector region motif; the sequence is CVPTTARRLY. Residues 59–62 and 128–131 contribute to the GTP site; these read DFPP and NKRD. The residue at position 200 (C200) is a Cysteine methyl ester. C200 carries the S-geranylgeranyl cysteine lipid modification. Positions 201–203 are cleaved as a propeptide — removed in mature form; the sequence is AIM.

Belongs to the small GTPase superfamily. Ras family. In terms of assembly, interacts with CADPS. Expressed at high levels in skeletal muscle and, at much lower levels, in heart, brain and pancreas.

The protein resides in the cell membrane. It catalyses the reaction GTP + H2O = GDP + phosphate + H(+). May facilitate the release of atrial natriuretic peptide by cardiomyocytes and hence play a role in the regulation of arterial pressure. The protein is Ras-like protein family member 10B (RASL10B) of Homo sapiens (Human).